An 89-amino-acid chain; its full sequence is Small ribosomal subunit protein uS15 (89 aa).

Belongs to the universal ribosomal protein uS15 family. Part of the 30S ribosomal subunit. Forms a bridge to the 50S subunit in the 70S ribosome, contacting the 23S rRNA.

Functionally, one of the primary rRNA binding proteins, it binds directly to 16S rRNA where it helps nucleate assembly of the platform of the 30S subunit by binding and bridging several RNA helices of the 16S rRNA. In terms of biological role, forms an intersubunit bridge (bridge B4) with the 23S rRNA of the 50S subunit in the ribosome. This is Small ribosomal subunit protein uS15 from Shewanella sediminis (strain HAW-EB3).